The primary structure comprises 199 residues: Cytochrome c oxidase assembly protein CtaG (199 aa).

Topologically, residues 1–12 are cytoplasmic; the sequence is MTNTPQTPPKER. A helical; Signal-anchor for type II membrane protein membrane pass occupies residues 13–35; the sequence is ANGVIVGACLAFVAGMVGMAYAA. Residues 36 to 199 lie on the Periplasmic side of the membrane; that stretch reads VPLYDMFCRV…VKDGETENRL (164 aa).

It belongs to the COX11/CtaG family.

It is found in the cell inner membrane. In terms of biological role, exerts its effect at some terminal stage of cytochrome c oxidase synthesis, probably by being involved in the insertion of the copper B into subunit I. The sequence is that of Cytochrome c oxidase assembly protein CtaG from Sinorhizobium fredii (strain NBRC 101917 / NGR234).